The chain runs to 130 residues: Early 3 receptor internalization and degradation beta protein (130 aa).

A signal peptide spans 1–19 (MKRSVIFVLLIFCALPVLC). The helical transmembrane segment at 53-77 (AWLYAIISVMVFCSTIFALAIYPYL) threads the bilayer. The tract at residues 122 to 125 (YFNL) is tyrosine-based sorting motif.

This sequence belongs to the adenoviridae E3_RID-beta family. In terms of assembly, interacts with E3 RID-alpha and E3 CR1-alpha. Post-translationally, phosphorylated on serine. O-glycosylated, but not N-glycosylated.

The protein resides in the host membrane. Functionally, prevents infected cell apoptosis induced by the host immune system. Acts by down-regulating a number of cell surface receptors in the tumor necrosis factor (TNF) receptor superfamily, namely FAS, TNFRSF10A/TRAIL receptor 1, and TNFRSF10B/TRAIL receptor 2. Down-regulation of these death receptors protects adenovirus-infected cells from apoptosis induced by the death receptor ligands Fas ligand and TRAIL. RID complex also down-regulates certain tyrosine kinase cell surface receptors, especially the epidermal growth factor receptor (EGFR). RID-mediated Fas and EGFR down-regulation occurs via endocytosis of the receptors into endosomes followed by transport to and degradation within lysosomes. The protein is Early 3 receptor internalization and degradation beta protein of Human adenovirus C serotype 2 (HAdV-2).